The chain runs to 354 residues: 4-hydroxy-2-oxovalerate aldolase 6 (354 aa).

The 253-residue stretch at 10–262 folds into the Pyruvate carboxyltransferase domain; it reads VRIVDTTLRD…ATGLDVMATL (253 aa). 18-19 contacts substrate; the sequence is RD. Mn(2+) is bound at residue Asp-19. His-22 (proton acceptor) is an active-site residue. The substrate site is built by Ser-172 and His-201. Mn(2+) is bound by residues His-201 and His-203. Residue Tyr-292 coordinates substrate.

This sequence belongs to the 4-hydroxy-2-oxovalerate aldolase family.

The catalysed reaction is (S)-4-hydroxy-2-oxopentanoate = acetaldehyde + pyruvate. The sequence is that of 4-hydroxy-2-oxovalerate aldolase 6 from Rhodococcus jostii (strain RHA1).